The sequence spans 372 residues: Tyrosine--tRNA ligase (372 aa).

The L-tyrosine site is built by Y37, Y169, Q173, D176, and Q191. The short motif at 246 to 250 (KMSKS) is the 'KMSKS' region element. K249 serves as a coordination point for ATP.

It belongs to the class-I aminoacyl-tRNA synthetase family. TyrS type 4 subfamily. As to quaternary structure, homodimer.

It localises to the cytoplasm. The enzyme catalyses tRNA(Tyr) + L-tyrosine + ATP = L-tyrosyl-tRNA(Tyr) + AMP + diphosphate + H(+). Functionally, catalyzes the attachment of tyrosine to tRNA(Tyr) in a two-step reaction: tyrosine is first activated by ATP to form Tyr-AMP and then transferred to the acceptor end of tRNA(Tyr). In Pyrobaculum arsenaticum (strain DSM 13514 / JCM 11321 / PZ6), this protein is Tyrosine--tRNA ligase.